The primary structure comprises 276 residues: Dermonecrotic toxin LlSicTox-alphaIV2ii (276 aa).

Residue H5 is part of the active site. E25 and D27 together coordinate Mg(2+). H41 (nucleophile) is an active-site residue. 2 disulfide bridges follow: C45–C51 and C47–C193. D85 provides a ligand contact to Mg(2+).

The protein belongs to the arthropod phospholipase D family. Class II subfamily. Requires Mg(2+) as cofactor. Expressed by the venom gland.

It localises to the secreted. The enzyme catalyses an N-(acyl)-sphingosylphosphocholine = an N-(acyl)-sphingosyl-1,3-cyclic phosphate + choline. The catalysed reaction is an N-(acyl)-sphingosylphosphoethanolamine = an N-(acyl)-sphingosyl-1,3-cyclic phosphate + ethanolamine. It carries out the reaction a 1-acyl-sn-glycero-3-phosphocholine = a 1-acyl-sn-glycero-2,3-cyclic phosphate + choline. It catalyses the reaction a 1-acyl-sn-glycero-3-phosphoethanolamine = a 1-acyl-sn-glycero-2,3-cyclic phosphate + ethanolamine. In terms of biological role, dermonecrotic toxins cleave the phosphodiester linkage between the phosphate and headgroup of certain phospholipids (sphingolipid and lysolipid substrates), forming an alcohol (often choline) and a cyclic phosphate. This toxin acts on sphingomyelin (SM). It may also act on ceramide phosphoethanolamine (CPE), lysophosphatidylcholine (LPC) and lysophosphatidylethanolamine (LPE), but not on lysophosphatidylserine (LPS), and lysophosphatidylglycerol (LPG). It acts by transphosphatidylation, releasing exclusively cyclic phosphate products as second products. Induces dermonecrosis, hemolysis, increased vascular permeability, edema, inflammatory response, and platelet aggregation. This is Dermonecrotic toxin LlSicTox-alphaIV2ii from Loxosceles laeta (South American recluse spider).